The following is a 663-amino-acid chain: CXXC-type zinc finger protein 1 (663 aa).

A PHD-type zinc finger spans residues 60 to 110 (QAYCICRSSDCSRFMIGCDGCEEWYHGDCIGITEKEAKHIKQYYCRRCKKE). Low complexity predominate over residues 134 to 161 (TSLNAPGVGPSGAAPAAAPVASATTSQQ). Residues 134–183 (TSLNAPGVGPSGAAPAAAPVASATTSQQAPPPTTAAAKRKNSSAREPKMG) are disordered. Residues 175–219 (SSAREPKMGKRCGTCEGCRRPNCNQCDACRVRVGHKPRCIFRTCV) form a CXXC-type zinc finger. Residues Cys-186, Cys-189, Cys-192, Cys-197, Cys-200, Cys-203, Cys-213, and Cys-218 each contribute to the Zn(2+) site. Residues 230 to 254 (QATQAGPSRKREKAAPKSRNVQVGP) form a disordered region. Ser-258 is subject to Phosphoserine.

As to quaternary structure, component of the SET1 complex, composed at least of the catalytic subunit Set1, wds/WDR5, Wdr82, Rbbp5, ash2, Cfp1/CXXC1, hcf and Dpy-30L1.

The protein resides in the nucleus. Component of the SET1 complex that specifically di- and trimethylates 'Lys-4' of histone H3. Essential for Set1 association with chromatin and trimethylation of histone H3 at 'Lys-4' at transcription puffs. Additionally, is critical for general chromosomal association of Set1. The chain is CXXC-type zinc finger protein 1 (Cfp1) from Drosophila melanogaster (Fruit fly).